We begin with the raw amino-acid sequence, 424 residues long: Delta(14)-sterol reductase erg24 (424 aa).

Helical transmembrane passes span isoleucine 19–cysteine 39 and leucine 112–isoleucine 132. NADP(+) contacts are provided by residues lysine 317, arginine 321, leucine 344, tryptophan 349, and asparagine 356–tyrosine 357. The helical transmembrane segment at proline 370–valine 390 threads the bilayer. Residues aspartate 396, cysteine 400 to tyrosine 404, and tyrosine 411 each bind NADP(+).

It belongs to the ERG4/ERG24 family.

It localises to the endoplasmic reticulum membrane. The catalysed reaction is 4,4-dimethyl-5alpha-cholesta-8,24-dien-3beta-ol + NADP(+) = 4,4-dimethyl-5alpha-cholesta-8,14,24-trien-3beta-ol + NADPH + H(+). It participates in steroid biosynthesis; zymosterol biosynthesis; zymosterol from lanosterol: step 2/6. Its pathway is steroid metabolism; ergosterol biosynthesis. Its function is as follows. Delta(14)-sterol reductase; part of the third module of ergosterol biosynthesis pathway that includes by the late steps of the pathway. Erg24 reduces the C14=C15 double bond of 4,4-dimethyl-cholesta-8,14,24-trienol to produce 4,4-dimethyl-cholesta-8,24-dienol. The third module or late pathway involves the ergosterol synthesis itself through consecutive reactions that mainly occur in the endoplasmic reticulum (ER) membrane. Firstly, the squalene synthase erg9 catalyzes the condensation of 2 farnesyl pyrophosphate moieties to form squalene, which is the precursor of all steroids. Secondly, squalene is converted into lanosterol by the consecutive action of the squalene epoxidase erg1 and the lanosterol synthase erg7. The lanosterol 14-alpha-demethylase erg11/cyp1 catalyzes C14-demethylation of lanosterol to produce 4,4'-dimethyl cholesta-8,14,24-triene-3-beta-ol. In the next steps, a complex process involving various demethylation, reduction and desaturation reactions catalyzed by the C-14 reductase erg24 and the C-4 demethylation complex erg25-erg26-erg27 leads to the production of zymosterol. Erg28 likely functions in the C-4 demethylation complex reaction by tethering erg26 and Erg27 to the endoplasmic reticulum or to facilitate interaction between these proteins. Then, the sterol 24-C-methyltransferase erg6 catalyzes the methyl transfer from S-adenosyl-methionine to the C-24 of zymosterol to form fecosterol. The C-8 sterol isomerase erg2 catalyzes the reaction which results in unsaturation at C-7 in the B ring of sterols and thus converts fecosterol to episterol. The sterol-C5-desaturases erg31 and erg32 then catalyze the introduction of a C-5 double bond in the B ring to produce 5-dehydroepisterol. The C-22 sterol desaturase erg5 further converts 5-dehydroepisterol into ergosta-5,7,22,24(28)-tetraen-3beta-ol by forming the C-22(23) double bond in the sterol side chain. Finally, ergosta-5,7,22,24(28)-tetraen-3beta-ol is substrate of the C-24(28) sterol reductase erg4 to produce ergosterol. In the genus Schizosaccharomyces, a second route exists between lanosterol and fecosterol, via the methylation of lanosterol to eburicol by erg6, followed by C14-demethylation by erg11/cyp1 and C4-demethylation by the demethylation complex erg25-erg26-erg27. The chain is Delta(14)-sterol reductase erg24 from Schizosaccharomyces pombe (strain 972 / ATCC 24843) (Fission yeast).